A 348-amino-acid chain; its full sequence is Small ribosomal subunit protein mS45 (348 aa).

A compositionally biased stretch (low complexity) spans 37 to 57; the sequence is SCSSSSPQSSQPTTHQQQCSS. A disordered region spans residues 37–63; sequence SCSSSSPQSSQPTTHQQQCSSFSTTAP.

This sequence belongs to the mitochondrion-specific ribosomal protein mS45 family. Component of the mitochondrial small ribosomal subunit (mt-SSU). Mature N.crassa 74S mitochondrial ribosomes consist of a small (37S) and a large (54S) subunit. The 37S small subunit contains a 16S ribosomal RNA (16S mt-rRNA) and 32 different proteins. The 54S large subunit contains a 23S rRNA (23S mt-rRNA) and 42 different proteins.

The protein localises to the mitochondrion. Its function is as follows. Component of the mitochondrial ribosome (mitoribosome), a dedicated translation machinery responsible for the synthesis of mitochondrial genome-encoded proteins, including at least some of the essential transmembrane subunits of the mitochondrial respiratory chain. The mitoribosomes are attached to the mitochondrial inner membrane and translation products are cotranslationally integrated into the membrane. The sequence is that of Small ribosomal subunit protein mS45 (mrps35) from Neurospora crassa (strain ATCC 24698 / 74-OR23-1A / CBS 708.71 / DSM 1257 / FGSC 987).